A 398-amino-acid polypeptide reads, in one-letter code: FK506-binding protein 4 (398 aa).

Disordered regions lie at residues 66 to 120 (EVDE…DEYE), 164 to 232 (VKHP…QLAK), and 245 to 288 (DLIA…KKNK). Over residues 170-228 (EPLEDLYSDEDSEEYSDDELDQEIEEDDELDHDEASSEESDEDQEFYDAISEGDEDIDE) the composition is skewed to acidic residues. Residues 264–287 (PETKKSKKTKDEKNTKATENEKKN) show a composition bias toward basic and acidic residues. Residues 312 to 398 (GSKVGMRYIG…TFDVKLVSLK (87 aa)) form the PPIase FKBP-type domain.

It belongs to the FKBP-type PPIase family. FKBP3/4 subfamily. As to quaternary structure, binds to histones H3 and H4.

It is found in the nucleus. It catalyses the reaction [protein]-peptidylproline (omega=180) = [protein]-peptidylproline (omega=0). With respect to regulation, inhibited by both FK506 and rapamycin. In terms of biological role, PPIase that acts as a histone chaperone. Histone proline isomerase that increases the rate of cis-trans isomerization at prolines on the histone H3 N-terminal tail. Proline isomerization influences H3 methylation thereby regulating gene expression. The sequence is that of FK506-binding protein 4 (FPR4) from Candida glabrata (strain ATCC 2001 / BCRC 20586 / JCM 3761 / NBRC 0622 / NRRL Y-65 / CBS 138) (Yeast).